Consider the following 88-residue polypeptide: MSPQADFDKAAGDVKKLKTKPTDDELKELYGLYKQSTVGDINIECPGMLDLKGKAKWDAWNLKKGLSKEDAMSAYVSKAHELIEKYGL.

The ACB domain occupies 3-88 (PQADFDKAAG…AHELIEKYGL (86 aa)). An acyl-CoA-binding positions include Lys-15, 30–34 (YGLYK), Lys-52, Lys-56, and Tyr-75.

The protein belongs to the ACBP family. In terms of tissue distribution, brain. Is selectively expressed in glial cells.

The protein localises to the endoplasmic reticulum. It is found in the golgi apparatus. Its function is as follows. May play important functions in the control of brain and pituitary activities. May regulate GABA neurotransmission through a paracrine and/or autocrine mechanism. May not bind acyl-CoA esters. This chain is Acyl-CoA-binding protein homolog, found in Pelophylax ridibundus (Marsh frog).